A 334-amino-acid chain; its full sequence is Ribosomal RNA large subunit methyltransferase F (334 aa).

The interval 1 to 25 (MPRPSSPRPDAERKSASPLHPRNRH) is disordered.

This sequence belongs to the methyltransferase superfamily. METTL16/RlmF family.

The protein localises to the cytoplasm. The enzyme catalyses adenosine(1618) in 23S rRNA + S-adenosyl-L-methionine = N(6)-methyladenosine(1618) in 23S rRNA + S-adenosyl-L-homocysteine + H(+). In terms of biological role, specifically methylates the adenine in position 1618 of 23S rRNA. The sequence is that of Ribosomal RNA large subunit methyltransferase F from Pseudomonas paraeruginosa (strain DSM 24068 / PA7) (Pseudomonas aeruginosa (strain PA7)).